Reading from the N-terminus, the 388-residue chain is Na(+)/H(+) antiporter NhaA (388 aa).

The Cytoplasmic portion of the chain corresponds to 1-11 (MKHLHRFFSSD). A helical transmembrane segment spans residues 12–31 (ASGGIILIIAAVLAMIMANS). Residues 32-58 (GATSGWYHDFLETPVQLRVGTLEINKN) lie on the Periplasmic side of the membrane. A helical transmembrane segment spans residues 59–80 (MLLWINDALMAVFFLLVGLEVK). Residues 81–96 (RELMQGSLASLRQAAF) are Cytoplasmic-facing. Residues 97–116 (PVIAAIGGMIVPALLYLAFN) form a helical membrane-spanning segment. The Periplasmic portion of the chain corresponds to 117-122 (YADPIT). The chain crosses the membrane as a helical span at residues 123–130 (REGWAIPA). Residues 131–154 (ATDIAFALGVLALLGSRVPLALKI) lie on the Cytoplasmic side of the membrane. Residues 155–176 (FLMALAIIDDLGAIIIIALFYT) traverse the membrane as a helical segment. At 177-180 (NDLS) the chain is on the periplasmic side. Residues 181–200 (MASLGVAAVAIAVLAVLNLC) traverse the membrane as a helical segment. Residues 201-204 (GVRR) lie on the Cytoplasmic side of the membrane. A helical transmembrane segment spans residues 205-222 (TGVYILVGVVLWTAVLKS). Residue Gly-223 is a topological domain, periplasmic. Residues 224–236 (VHATLAGVIVGFF) traverse the membrane as a helical segment. Residues 237–253 (IPLKEKHGRSPAKRLEH) are Cytoplasmic-facing. The helical transmembrane segment at 254–272 (VLHPWVAYLILPLFAFANA) threads the bilayer. The Periplasmic segment spans residues 273–286 (GVSLQGVTLEGLTS). The chain crosses the membrane as a helical span at residues 287 to 310 (ILPLGIIAGLLIGKPLGISLFCWL). Residues 311-339 (ALRLKLAHLPEGTTYQQIMAVGILCGIGF) are Cytoplasmic-facing. Residues 340-350 (TMSIFIASLAF) traverse the membrane as a helical segment. Over 351–357 (GSVDPEL) the chain is Periplasmic. A helical membrane pass occupies residues 358 to 380 (INWAKLGILVGSISSAVIGYSWL). Residues 381-388 (RVRLRPSV) lie on the Cytoplasmic side of the membrane.

The protein belongs to the NhaA Na(+)/H(+) (TC 2.A.33) antiporter family.

The protein resides in the cell inner membrane. The catalysed reaction is Na(+)(in) + 2 H(+)(out) = Na(+)(out) + 2 H(+)(in). Its function is as follows. Na(+)/H(+) antiporter that extrudes sodium in exchange for external protons. This chain is Na(+)/H(+) antiporter NhaA, found in Escherichia coli O6:K15:H31 (strain 536 / UPEC).